The chain runs to 240 residues: Cell division protein FtsQ (240 aa).

The Cytoplasmic segment spans residues 1-7 (MTGPGLR). Residues 8–28 (LLAGMGLAGALVLGLSLWLHF) traverse the membrane as a helical segment. The Periplasmic portion of the chain corresponds to 29-240 (DPDQHLPIGS…EADNDGGNAR (212 aa)). Residues 34 to 102 (LPIGSIQITG…DTLEVHVTEP (69 aa)) enclose the POTRA domain.

Belongs to the FtsQ/DivIB family. FtsQ subfamily. Part of a complex composed of FtsB, FtsL and FtsQ.

It is found in the cell inner membrane. In terms of biological role, essential cell division protein. May link together the upstream cell division proteins, which are predominantly cytoplasmic, with the downstream cell division proteins, which are predominantly periplasmic. May control correct divisome assembly. This Thioalkalivibrio sp. (strain K90mix) protein is Cell division protein FtsQ.